The sequence spans 199 residues: Fe/S biogenesis protein NfuA (199 aa).

2 residues coordinate [4Fe-4S] cluster: Cys-151 and Cys-154.

It belongs to the NfuA family. Homodimer. [4Fe-4S] cluster is required as a cofactor.

Involved in iron-sulfur cluster biogenesis. Binds a 4Fe-4S cluster, can transfer this cluster to apoproteins, and thereby intervenes in the maturation of Fe/S proteins. Could also act as a scaffold/chaperone for damaged Fe/S proteins. The polypeptide is Fe/S biogenesis protein NfuA (Xylella fastidiosa (strain M12)).